The primary structure comprises 1064 residues: Carbamoyl phosphate synthase large chain (1064 aa).

The carboxyphosphate synthetic domain stretch occupies residues 1–401; it reads MPKRNDIKKI…SLLKAVRSLE (401 aa). Arg129, Arg169, Gly175, Gly176, Glu208, Ile210, Glu215, Gly241, Val242, His243, Gln284, and Glu298 together coordinate ATP. One can recognise an ATP-grasp 1 domain in the interval 133–327; it reads KELCERIGEP…IAKMSAKIAI (195 aa). Gln284, Glu298, and Asn300 together coordinate Mg(2+). Gln284, Glu298, and Asn300 together coordinate Mn(2+). Positions 402 to 546 are oligomerization domain; it reads IGVFHNDLQE…YSTYEWENES (145 aa). The carbamoyl phosphate synthetic domain stretch occupies residues 547 to 929; it reads KRSSKEKIIV…ALYKSFEAAK (383 aa). Residues 671 to 861 enclose the ATP-grasp 2 domain; sequence EKALQDLEIP…MAQLATQMIL (191 aa). Positions 707, 746, 748, 752, 777, 778, 779, 780, 820, and 832 each coordinate ATP. The Mg(2+) site is built by Gln820, Glu832, and Asn834. Mn(2+) contacts are provided by Gln820, Glu832, and Asn834. In terms of domain architecture, MGS-like spans 930–1064; the sequence is LHMADYGSVL…QSRSFTTKNI (135 aa). An allosteric domain region spans residues 930 to 1064; sequence LHMADYGSVL…QSRSFTTKNI (135 aa).

It belongs to the CarB family. As to quaternary structure, composed of two chains; the small (or glutamine) chain promotes the hydrolysis of glutamine to ammonia, which is used by the large (or ammonia) chain to synthesize carbamoyl phosphate. Tetramer of heterodimers (alpha,beta)4. Mg(2+) serves as cofactor. The cofactor is Mn(2+).

The enzyme catalyses hydrogencarbonate + L-glutamine + 2 ATP + H2O = carbamoyl phosphate + L-glutamate + 2 ADP + phosphate + 2 H(+). The catalysed reaction is hydrogencarbonate + NH4(+) + 2 ATP = carbamoyl phosphate + 2 ADP + phosphate + 2 H(+). The protein operates within amino-acid biosynthesis; L-arginine biosynthesis; carbamoyl phosphate from bicarbonate: step 1/1. It participates in pyrimidine metabolism; UMP biosynthesis via de novo pathway; (S)-dihydroorotate from bicarbonate: step 1/3. Large subunit of the glutamine-dependent carbamoyl phosphate synthetase (CPSase). CPSase catalyzes the formation of carbamoyl phosphate from the ammonia moiety of glutamine, carbonate, and phosphate donated by ATP, constituting the first step of 2 biosynthetic pathways, one leading to arginine and/or urea and the other to pyrimidine nucleotides. The large subunit (synthetase) binds the substrates ammonia (free or transferred from glutamine from the small subunit), hydrogencarbonate and ATP and carries out an ATP-coupled ligase reaction, activating hydrogencarbonate by forming carboxy phosphate which reacts with ammonia to form carbamoyl phosphate. The polypeptide is Carbamoyl phosphate synthase large chain (Lactococcus lactis subsp. lactis (strain IL1403) (Streptococcus lactis)).